Here is a 434-residue protein sequence, read N- to C-terminus: Citrate synthase (434 aa).

Catalysis depends on residues His-310 and Asp-368.

It belongs to the citrate synthase family.

The catalysed reaction is oxaloacetate + acetyl-CoA + H2O = citrate + CoA + H(+). The protein operates within carbohydrate metabolism; tricarboxylic acid cycle; isocitrate from oxaloacetate: step 1/2. In Bradyrhizobium diazoefficiens (strain JCM 10833 / BCRC 13528 / IAM 13628 / NBRC 14792 / USDA 110), this protein is Citrate synthase (gltA).